A 349-amino-acid polypeptide reads, in one-letter code: Selenide, water dikinase (349 aa).

The active site involves Sec19. Sec19 is a non-standard amino acid (selenocysteine). Residues Lys22 and 50–52 (LGD) each bind ATP. Asp53 is a Mg(2+) binding site. ATP is bound by residues Asp69, Asp92, and 140–142 (GHT). Asp92 contacts Mg(2+). Asp246 is a binding site for Mg(2+).

It belongs to the selenophosphate synthase 1 family. Class I subfamily. Homodimer. The cofactor is Mg(2+).

The enzyme catalyses hydrogenselenide + ATP + H2O = selenophosphate + AMP + phosphate + 2 H(+). Its function is as follows. Synthesizes selenophosphate from selenide and ATP. The sequence is that of Selenide, water dikinase from Methanocaldococcus jannaschii (strain ATCC 43067 / DSM 2661 / JAL-1 / JCM 10045 / NBRC 100440) (Methanococcus jannaschii).